The chain runs to 115 residues: Large ribosomal subunit protein bL20 (115 aa).

It belongs to the bacterial ribosomal protein bL20 family.

In terms of biological role, binds directly to 23S ribosomal RNA and is necessary for the in vitro assembly process of the 50S ribosomal subunit. It is not involved in the protein synthesizing functions of that subunit. This Borreliella burgdorferi (strain ATCC 35210 / DSM 4680 / CIP 102532 / B31) (Borrelia burgdorferi) protein is Large ribosomal subunit protein bL20 (rplT).